A 358-amino-acid chain; its full sequence is C-X-C chemokine receptor type 4-B (358 aa).

Positions 1-25 (MDGFSGGIDINIFDGNSTENGSGDF) are important for chemokine binding and signaling. The Extracellular portion of the chain corresponds to 1–44 (MDGFSGGIDINIFDGNSTENGSGDFEDFIEPCFMQENSDFNRIF). 2 N-linked (GlcNAc...) asparagine glycosylation sites follow: Asn-16 and Asn-20. Intrachain disulfides connect Cys-32–Cys-281 and Cys-113–Cys-190. Residues 45–67 (LPTIYSFIFLLGIIGNGLVVVVM) traverse the membrane as a helical segment. Residues 68 to 81 (GYQKKSRTMTDKYR) lie on the Cytoplasmic side of the membrane. A helical membrane pass occupies residues 82-103 (LHLSVADLLFVFTLPFWSVDAA). The tract at residues 98 to 101 (WSVD) is chemokine binding. Topologically, residues 104–114 (IGWYFKEFLCK) are extracellular. A helical transmembrane segment spans residues 115–134 (AVHVIYTVNLYSSVLILAFI). Residues 117–121 (HVIYT) are chemokine binding. At 135 to 158 (SLDRYLAIVHATNSQGSRKMLADK) the chain is on the cytoplasmic side. The tract at residues 139–151 (YLAIVHATNSQGS) is involved in dimerization; when bound to chemokine. A helical membrane pass occupies residues 159–178 (VVYAGVWLPALLLTVPDLVF). At 179-202 (ASVSNENGQFVCDRIYPIDNRETW) the chain is on the extracellular side. The chemokine binding, important for signaling stretch occupies residues 190 to 194 (CDRIY). Residues 203-223 (TVGFRFLHITVGLILPGLIIL) traverse the membrane as a helical segment. The Cytoplasmic portion of the chain corresponds to 224–248 (VCYCVIISKLSHSKGHQKRKALKTT). A helical transmembrane segment spans residues 249 to 268 (VILILAFFACWLPYYVCLTT). Residues 269–289 (DTFMMLGLVKADCIWENTLHK) lie on the Extracellular side of the membrane. The helical transmembrane segment at 290–309 (AISITEALAFFHCCLNPILY) threads the bilayer. Residues 310 to 358 (AFLGAKFKKSAQNAFTSVSRGSSLKILSKKRAGLSSVSTESESSSFHSS) are Cytoplasmic-facing. Residues 338-358 (KKRAGLSSVSTESESSSFHSS) are disordered. Residues 344-358 (SSVSTESESSSFHSS) are compositionally biased toward low complexity.

Belongs to the G-protein coupled receptor 1 family. Monomer. Can form dimers. Post-translationally, sulfation is required for efficient binding of cxcl12/sdf-1alpha and promotes its dimerization. In terms of processing, O- and N-glycosylated.

It localises to the cell membrane. The protein resides in the cytoplasm. Its subcellular location is the nucleus. The protein localises to the early endosome. It is found in the late endosome. It localises to the lysosome. Functionally, receptor for the C-X-C chemokine cxcl12/sdf-1. Transduces a signal by increasing the intracellular level of calcium ions. Signaling with cxcl12/sdf-1 mediates the directional movement of mesodermal cells during gastrulation. May play a role in the migration of embryonic presumptive primordial germ cells (pPGCs). May also be involved in regulating migration of hematopoietic stem cells into the larval liver. This Xenopus laevis (African clawed frog) protein is C-X-C chemokine receptor type 4-B (cxcr4-b).